The chain runs to 458 residues: MSKQQAPVNKNDVVEVTIEDLTHDGAGVAKVDGYALFIPKALPGERLKAKVVKVKKGYGFGRVLNMIEASPDRVEAPCPVFNQCGGCQLQHMSYDAQLRYKQKQVQDVLERIGKITAVTVRPTIGMNEPWRYRNKAQVPVGEREGGLIAGFYQERSHRIIDMDECMIQHEENDKVIRQVKELARELGIRGYDEEKHRGTLRHVVARYGKNTGEIMVVLITRGEELPHKKTLIERIHKAIPHVKSIVQNVNPKRTNVIFGDKTKVLWGEEYIYDTIGDIKFAISARSFYQVNPEQTKVLYDQALEFANLTGSETVIDAYCGIGTISLFLAQQAKHVYGVEIVPEAISDAKRNARLNGFANVQFAVGDAEKVMPWWYAQGVRADVIVVDPPRKGCDEALLKTILNMKPDRVVYVSCNPATLARDLRVLEDGGYETKDVQPVDMFPWTTHIESVAVLELKN.

The TRAM domain occupies 5–65 (QAPVNKNDVV…KGYGFGRVLN (61 aa)). Residues Cys-78, Cys-84, Cys-87, and Cys-165 each coordinate [4Fe-4S] cluster. Residues Gln-289, Tyr-318, Glu-339, and Asp-387 each contribute to the S-adenosyl-L-methionine site. The Nucleophile role is filled by Cys-414.

The protein belongs to the class I-like SAM-binding methyltransferase superfamily. RNA M5U methyltransferase family.

This is an uncharacterized protein from Halalkalibacterium halodurans (strain ATCC BAA-125 / DSM 18197 / FERM 7344 / JCM 9153 / C-125) (Bacillus halodurans).